Here is a 496-residue protein sequence, read N- to C-terminus: Transcription termination factor MTERF9, chloroplastic (496 aa).

A chloroplast-targeting transit peptide spans 1 to 44 (MAGFSLYCFKNPRILFTLPSESPLFVLGSDKCSPATRRPSRKTR). 2 disordered regions span residues 57 to 90 (IINPKKKSRYGQTLSPYDSDEDDDDDDDDDDDDW) and 102 to 155 (YEKK…SWRL). Residues 74 to 90 (DSDEDDDDDDDDDDDDW) show a composition bias toward acidic residues. Positions 105-123 (KKPKSHKQTIAKKSVKKGI) are enriched in basic residues. Over residues 146-155 (SEKKKESWRL) the composition is skewed to basic and acidic residues.

It belongs to the mTERF family.

It localises to the plastid. It is found in the chloroplast. Transcription termination factor required for processing and steady-state levels of plastid transcripts. May play a role in response to abiotic stresses. This Arabidopsis thaliana (Mouse-ear cress) protein is Transcription termination factor MTERF9, chloroplastic.